We begin with the raw amino-acid sequence, 479 residues long: Adenosylhomocysteinase (479 aa).

Residues T66, D142, and E203 each contribute to the substrate site. Residue 204 to 206 (TTT) participates in NAD(+) binding. Substrate is bound by residues K233 and D237. NAD(+)-binding positions include N238, 267-272 (GYGDVG), E290, N325, 346-348 (IGH), and N394.

The protein belongs to the adenosylhomocysteinase family. NAD(+) is required as a cofactor.

The protein resides in the cytoplasm. It catalyses the reaction S-adenosyl-L-homocysteine + H2O = L-homocysteine + adenosine. It participates in amino-acid biosynthesis; L-homocysteine biosynthesis; L-homocysteine from S-adenosyl-L-homocysteine: step 1/1. Its function is as follows. May play a key role in the regulation of the intracellular concentration of adenosylhomocysteine. This is Adenosylhomocysteinase from Oleidesulfovibrio alaskensis (strain ATCC BAA-1058 / DSM 17464 / G20) (Desulfovibrio alaskensis).